A 125-amino-acid chain; its full sequence is uncharacterized protein (125 aa).

This is an uncharacterized protein from Homo sapiens (Human).